The chain runs to 386 residues: MEVNLLKTHQFSTISIAASFLKPIESAAEPEEETIYFYGAAAYLKEQIIDAFGYAAGSRFMYSANLFFDQQLKTCGTRLIHPLYNGNLHVDALMKTFADLSFPSSLSFEAFEKARNELLLKIEKKFTDPFSYSAARLAEEVFGNPMYGTGMFGRRDRIKAIHPKRFLDATDFIVDLVSQQKQLNILGQVQACDVRGHAPQTSAVTSGRIPVNRHVFETETRSAAGPSVLTLGFDCGEMKDASDYIKIQLIDGLLGKYGHSALFKHFREKDLAVYHVITRYDVMNNLLLVSICTDQLHEKDIPPRVLEAVSAFHTDERELEQAKQFLRNELLLQFDSPEGLLAYMGVLRRFSCTKEALLDGISAVTCRDVLQFIATINYIGAHVVRG.

In terms of biological role, involved in the production of the bacteriocin subtilosin. This is Antilisterial bacteriocin subtilosin biosynthesis protein AlbE (albE) from Bacillus subtilis (strain 168).